Consider the following 556-residue polypeptide: PPE family protein PPE2 (556 aa).

The PPE stretch occupies residues Ala8 to Ala164. The interval Gln201 to Leu256 is SH3-like. The interval Leu319–Leu340 is leucine zipper motif. Disordered stretches follow at residues Thr385–Thr418 and Gly443–Glu556. The segment covering Pro400–Val417 has biased composition (pro residues). A compositionally biased stretch (low complexity) spans Ala456–Pro471. Over residues Gln472–Gln481 the composition is skewed to basic residues. Positions Arg473 to Gln481 match the Nuclear localization signal motif.

Belongs to the mycobacterial PPE family.

Its subcellular location is the secreted. The protein resides in the host cytoplasm. It localises to the host nucleus. Inhibits nitric oxide (NO) production in activated macrophages. Acts by inhibiting expression of the host inducible nitric oxide synthase (iNOS). PPE2 is translocated into the host macrophage nucleus, where it interacts with a GATA-binding site overlapping with the TATA box of NOS2 (iNOS) promoter, and strongly inhibits NOS2 gene transcription. Reduction in NO production in turn facilitates intracellular survival of the bacilli inside the macrophage. In addition, disrupts the assembly of NADPH oxidase complex, which inhibits NADPH oxidase-mediated reactive oxygen species (ROS) generation in macrophages and favors M.tuberculosis survival. Acts by interacting with NCF2, the cytosolic subunit of NADPH oxidase, and preventing translocation of NCF2 and NCF1 to the membrane, which causes a reduction of the functional assembly of NADPH oxidase complex and a decrease in NADPH oxidase activity. This Mycobacterium tuberculosis (strain ATCC 25618 / H37Rv) protein is PPE family protein PPE2 (PPE2).